Reading from the N-terminus, the 391-residue chain is MVAAKTIKTLVWKSELPDNIKEELYNKLIEYNKKYKLKKAEVEAIIEDAVNEYRKALVEPGEPIGTVAAQSIGEPSTQMTLNTFHYAGVAEINVTLGLPRIIEIVDARKNPSTPVMTVFLDEEHRYDLEKAREVARRIEGTTIENLAREMSIDILNFEFIVEIDPERLEKSGLDMERILKKLSGSFKSAEFEAEGYSLIVRPKKVTKLSDLRKLAEKVKKHRLKGLSGVGKTIIRKEGDEYVIYTEGSNFKQVLKVPGVDPTRTRTNNIWEIADVLGIEAARNAIIEEIVNTMREQGLEVDIRHIMLVADMMTLDGVIRPIGRHGIVGEKSSVLARAAFEITTQHLFEAAERGEVDPLNGVVENVLIGQPVPVGTGIVKLTMNLPLRPQRE.

It belongs to the RNA polymerase beta' chain family. As to quaternary structure, part of the RNA polymerase complex.

It is found in the cytoplasm. It carries out the reaction RNA(n) + a ribonucleoside 5'-triphosphate = RNA(n+1) + diphosphate. Functionally, DNA-dependent RNA polymerase (RNAP) catalyzes the transcription of DNA into RNA using the four ribonucleoside triphosphates as substrates. Forms part of the jaw domain. This chain is DNA-directed RNA polymerase subunit Rpo1C, found in Thermococcus gammatolerans (strain DSM 15229 / JCM 11827 / EJ3).